A 687-amino-acid polypeptide reads, in one-letter code: A-kinase anchor protein 8 (687 aa).

The tract at residues 1–195 is interaction with MCM2; sequence MEQSYGGYGA…FLRGRGQGRF (195 aa). The interval 1-210 is interaction with DPY30; that stretch reads MEQSYGGYGA…SSTFIRSDPF (210 aa). Ser-72 bears the Phosphoserine mark. Residues 104–124 form a disordered region; that stretch reads SKEGGRGGISSGGEGMQDRDS. Arg-109 carries the asymmetric dimethylarginine; alternate modification. Position 109 is an omega-N-methylarginine; alternate (Arg-109). The span at 109-118 shows a compositional bias: gly residues; that stretch reads RGGISSGGEG. Residues 109–201 form an interaction with DDX5 region; the sequence is RGGISSGGEG…QGRFQDRSNS (93 aa). Residues 127-152 are nuclear matrix targeting site; that stretch reads RFQPYESYDSRPCMPEHTPYRPSYSY. Positions 189–221 are disordered; sequence GRGQGRFQDRSNSSTFIRSDPFMPPSASSEPLS. Ser-199 is modified (phosphoserine). Residues Arg-233 and Arg-277 each carry the omega-N-methylarginine modification. A disordered region spans residues 278–380; that stretch reads SQTRIRDWPR…KQRRRDRMRD (103 aa). Basic and acidic residues-rich tracts occupy residues 281-295 and 312-321; these read RIRD…ERFG and PDAKLARADS. Residues 287–304 carry the Bipartite nuclear localization signal motif; sequence RRRGFERFGPDNMGRKRK. Residue Lys-315 forms a Glycyl lysine isopeptide (Lys-Gly) (interchain with G-Cter in SUMO2) linkage. 3 positions are modified to phosphoserine: Ser-321, Ser-326, and Ser-337. Positions 322 to 332 are enriched in acidic residues; the sequence is EGDLSENDDGA. A compositionally biased stretch (basic and acidic residues) spans 336 to 358; that stretch reads RSGDEEFRGEDDLCDSRKQRGEK. Residues 385-448 form an involved in chromatin-binding region; it reads RIQFACSVCK…NKKIEKRRQE (64 aa). C2H2 AKAP95-type zinc fingers lie at residues 390-412 and 479-502; these read CSVC…SKFH and CLAC…SVDH. The interval 523 to 565 is involved in condensin complex recruitment; that stretch reads SVLNNKHIVKMLEKYLKGEDPFVNETADLETEGDENLGEEKET. Residue Thr-553 is modified to Phosphothreonine. Lys-563 participates in a covalent cross-link: Glycyl lysine isopeptide (Lys-Gly) (interchain with G-Cter in SUMO2). The tract at residues 568 to 585 is RII-binding; sequence EVAAEVLAEVITAAVKAV. Residues 572 to 589 are required for interaction with MYCBP; it reads EVLAEVITAAVKAVEGDG. A disordered region spans residues 606-687; it reads VDTAEAGSDS…DAEAKDTPTE (82 aa). Residues 633–648 show a composition bias toward basic and acidic residues; sequence RNMEDMARGEAAEARN. Positions 649–666 are enriched in low complexity; it reads EAAVPAAAAGSPVPVIAI. Ser-659 bears the Phosphoserine mark.

Belongs to the AKAP95 family. Binds to dimeric RII-alpha regulatory subunit of PKA during mitosis. Interacts (via C-terminus) with FIGN. Interacts with NCAPD2, CCND1, CCND3, MCM2, RPS6KA1, PDE4A, CASP3. Interacts with DDX5, CCNE1. Interacts with NFKB1; detetcted in the cytoplasm. Interacts with MYCBP; MYCBP is translocated to the nucleus and the interaction prevents the association of the PKA catalytic subunit leading to suppression of PKA activity. Interacts with DPY30; mediating AKAP8 association with at least the MLL4/WBP7 HMT complex. Interacts with HDAC3; increased during mitosis. Interacts with GJA1; in the nucleus and in the nuclear membrane; the nuclear association increases with progress of cell cycle G1, S and G2 phase and decreases in M phase. In terms of processing, phosphorylated on tyrosine residues probably by SRC subfamily protein kinases; multiple phosphorylation is leading to dissociation from nuclear structures implicated in chromatin structural changes. Widely expressed. The protein has been detected in liver, fibroblasts, granulosa, myoblast, lymphoma and Sertoli cells.

It localises to the nucleus matrix. The protein localises to the nucleus. The protein resides in the nucleolus. Its subcellular location is the cytoplasm. Its function is as follows. Anchoring protein that mediates the subcellular compartmentation of cAMP-dependent protein kinase (PKA type II). Acts as an anchor for a PKA-signaling complex onto mitotic chromosomes, which is required for maintenance of chromosomes in a condensed form throughout mitosis. Recruits condensin complex subunit NCAPD2 to chromosomes required for chromatin condensation; the function appears to be independent from PKA-anchoring. May help to deliver cyclin D/E to CDK4 to facilitate cell cycle progression. Required for cell cycle G2/M transition and histone deacetylation during mitosis. In mitotic cells recruits HDAC3 to the vicinity of chromatin leading to deacetylation and subsequent phosphorylation at 'Ser-10' of histone H3; in this function may act redundantly with AKAP8L. Involved in nuclear retention of RPS6KA1 upon ERK activation thus inducing cell proliferation. May be involved in regulation of DNA replication by acting as scaffold for MCM2. Enhances HMT activity of the KMT2 family MLL4/WBP7 complex and is involved in transcriptional regulation. In a teratocarcinoma cell line is involved in retinoic acid-mediated induction of developmental genes implicating H3 'Lys-4' methylation. May be involved in recruitment of active CASP3 to the nucleus in apoptotic cells. May act as a carrier protein of GJA1 for its transport to the nucleus. May play a repressive role in the regulation of rDNA transcription. Preferentially binds GC-rich DNA in vitro. In cells, associates with ribosomal RNA (rRNA) chromatin, preferentially with rRNA promoter and transcribed regions. Involved in modulation of Toll-like receptor signaling. Required for the cAMP-dependent suppression of TNF-alpha in early stages of LPS-induced macrophage activation; the function probably implicates targeting of PKA to NFKB1. This chain is A-kinase anchor protein 8 (Akap8), found in Rattus norvegicus (Rat).